The following is a 532-amino-acid chain: O-phosphoserine--tRNA(Cys) ligase (532 aa).

Substrate is bound by residues 186 to 188 (HMT), 231 to 233 (SAS), 273 to 274 (YY), and N317.

The protein belongs to the class-II aminoacyl-tRNA synthetase family. O-phosphoseryl-tRNA(Cys) synthetase subfamily. Homotetramer. Interacts with SepCysS.

The catalysed reaction is tRNA(Cys) + O-phospho-L-serine + ATP = O-phospho-L-seryl-tRNA(Cys) + AMP + diphosphate. Functionally, catalyzes the attachment of O-phosphoserine (Sep) to tRNA(Cys). This Methanothermobacter thermautotrophicus (strain ATCC 29096 / DSM 1053 / JCM 10044 / NBRC 100330 / Delta H) (Methanobacterium thermoautotrophicum) protein is O-phosphoserine--tRNA(Cys) ligase.